The primary structure comprises 67 residues: Probable tautomerase K2 (67 aa).

The active-site Proton acceptor; via imino nitrogen is Pro-2.

Belongs to the 4-oxalocrotonate tautomerase family.

The protein is Probable tautomerase K2 of Dickeya dadantii (strain 3937) (Erwinia chrysanthemi (strain 3937)).